Reading from the N-terminus, the 3902-residue chain is Hybrid PKS-NRPS synthetase pynA (3902 aa).

Residues 1–25 (MDTPLSSSEISPRFSNTVPSSVSSM) form a disordered region. A Ketosynthase family 3 (KS3) domain is found at 29 to 441 (ADPSVIVGLA…GTNAHVILDA (413 aa)). Catalysis depends on for beta-ketoacyl synthase activity residues Cys-201, His-324, and His-362. Positions 555-868 (VFTGQGAQWF…PYLASLTRGV (314 aa)) are malonyl-CoA:ACP transacylase (MAT) domain. Ser-647 acts as the For malonyltransferase activity in catalysis. The interval 945–1080 (HSILGARMPG…GLVSVETNAL (136 aa)) is N-terminal hotdog fold. A dehydratase (DH) domain region spans residues 945–1256 (HSILGARMPG…LEVTALGSDK (312 aa)). The PKS/mFAS DH domain occupies 945–1258 (HSILGARMPG…VTALGSDKTD (314 aa)). His-977 functions as the Proton acceptor; for dehydratase activity in the catalytic mechanism. Residues 1100-1258 (QESIPAETLY…VTALGSDKTD (159 aa)) are C-terminal hotdog fold. Asp-1164 (proton donor; for dehydratase activity) is an active-site residue. The tract at residues 1629–1945 (GLLETLVFED…MGKHTGKVVL (317 aa)) is enoyl reductase (ER) domain. Positions 1971 to 2143 (TYLLVGGLGG…AGTTMNCGMI (173 aa)) are ketoreductase (KR) domain. One can recognise a Carrier 1 domain in the interval 2251 to 2328 (ERTTLVLSAF…ALVTKASGLI (78 aa)). The residue at position 2288 (Ser-2288) is an O-(pantetheine 4'-phosphoryl)serine. Residues 2337 to 2350 (KAENVDNEGAKGNE) show a composition bias toward basic and acidic residues. A disordered region spans residues 2337-2364 (KAENVDNEGAKGNEDQEVETQQGQLNQP). The interval 2374 to 2816 (VPMSSFQQRL…AEVNLCGALE (443 aa)) is condensation (C) domain 7. The interval 2836–3248 (SVGVCQRIME…NGLLTFKGRI (413 aa)) is adenylation (A) domain 8. The 77-residue stretch at 3391-3467 (GDDAEILQGV…AIAGMIQKQL (77 aa)) folds into the Carrier 2 domain. Ser-3427 carries the post-translational modification O-(pantetheine 4'-phosphoryl)serine. Positions 3515 to 3774 (LTGIDTFIGL…VDFLPVDALT (260 aa)) are thioesterase (TE) domain.

The protein in the C-terminal section; belongs to the NRP synthetase family.

Its pathway is secondary metabolite biosynthesis. Its function is as follows. Hybrid PKS-NRPS synthetase; part of the gene cluster that mediates the biosynthesis of pyranonigrins, a family of antioxidative compounds. The first step of pyranonigrins biosynthesis is performed by the hybrid PKS-NRPS synthetase that condenses 6 malonyl-CoA units to an acetyl starter unit, to form a 1,3,5-trioxotetradecane-6,8-dienyl-ACP. The enoyl reductase (ER) domain of pynA is likely to be functional during the first two rounds of polyketide chain extension, to generate the saturated C-C bonds of the alkyl side chain. PynA subsequently forms the amide bond between the acyl chain and L-serine. Although pynA has a terminal reductase domain, it appears to require the thioesterase pynI for the release of the straight-chain intermediate from pynA via the formation of a tetramic acid pyranonigrin J. The methyltransferase pynC then coverts pyranonigrin J to pyranonigrin I via N-methylation. The FAD-dependent monooxygenase pynG catalyzes an epoxidation-mediated cyclization to form the dihydro-gamma-pyrone moiety, followed by pynD-catalyzed oxidation of the alcohol to the ketone and enolization to yield the characteristic tetramic acid-fused gamma-pyrone core of pyranonigrin H. Pyranonigrin H is substrate of pynH for dehydration-mediated exo-methylene formation from the serine side chain to produce pyranonigrin E, before the oxidase pynE reduces the exo-methylene of pyranonigrin E into a pendant methyl to form pyranonigrin G. The FAD-linked oxidoreductase pynB performs the reverse reaction and converts pyranonigrin G back to pyranonigrin E. The chain is Hybrid PKS-NRPS synthetase pynA from Aspergillus niger (strain ATCC MYA-4892 / CBS 513.88 / FGSC A1513).